The primary structure comprises 237 residues: Phosphoribosylaminoimidazole-succinocarboxamide synthase (237 aa).

This sequence belongs to the SAICAR synthetase family.

It carries out the reaction 5-amino-1-(5-phospho-D-ribosyl)imidazole-4-carboxylate + L-aspartate + ATP = (2S)-2-[5-amino-1-(5-phospho-beta-D-ribosyl)imidazole-4-carboxamido]succinate + ADP + phosphate + 2 H(+). The protein operates within purine metabolism; IMP biosynthesis via de novo pathway; 5-amino-1-(5-phospho-D-ribosyl)imidazole-4-carboxamide from 5-amino-1-(5-phospho-D-ribosyl)imidazole-4-carboxylate: step 1/2. This is Phosphoribosylaminoimidazole-succinocarboxamide synthase from Listeria innocua serovar 6a (strain ATCC BAA-680 / CLIP 11262).